Here is a 540-residue protein sequence, read N- to C-terminus: Chaperonin GroEL (540 aa).

ATP is bound by residues 29 to 32 (TLGP), 86 to 90 (DGTTT), G413, 476 to 478 (NAA), and D492.

This sequence belongs to the chaperonin (HSP60) family. Forms a cylinder of 14 subunits composed of two heptameric rings stacked back-to-back. Interacts with the co-chaperonin GroES.

The protein localises to the cytoplasm. The catalysed reaction is ATP + H2O + a folded polypeptide = ADP + phosphate + an unfolded polypeptide.. In terms of biological role, together with its co-chaperonin GroES, plays an essential role in assisting protein folding. The GroEL-GroES system forms a nano-cage that allows encapsulation of the non-native substrate proteins and provides a physical environment optimized to promote and accelerate protein folding. This Streptococcus agalactiae serotype V (strain ATCC BAA-611 / 2603 V/R) protein is Chaperonin GroEL.